The sequence spans 631 residues: MPGIPLVSRETSSCSRSTEQMCHEDSRLRISEEEEIAAEESLAAYCKPVELYNIIQRRAIRNPLFLQRCLHYKIEAKHKRRIQMTVFLSGAIDAGVQTQKLFPLYILLARLVSPKPVAEYSAVYRFSRACILTGGLGVDGVSQAQANFLLPDMNRLALEAKSGSLAILFISFAGAQNSQFGIDSGKIHSGNIGGHCLWSKIPLQSLYASWQKSPNMDLGQRVDTVSLVEMQPCFIKLKSMSEEKCVSIQVPSNPLTSSSPQQVQVTISAEEVGSTEKSPYSSFSYNDISSSSLLQIIRLRTGNVVFNYRYYNNKLQKTEVTEDFSCPFCLVKCASFKGLRYHLPSTHDLLNFEFWVTEEFQAVNVSLKTETMISKVNEDDVDPKQQTFFFSSKKFRRRRQKSQVRSSRQGPHLGLGCEVLDKTDDAHSVRSEKSRIPPGKHYERIGGAESGQRVPPGTSPADVQSCGDPDYVQSIAGSTMLQFAKTRKISIERSDLRNRSLLQKRQFFHSHRAQPMALEQVLSDRDSEDEVDDDVADFEDRRMLDDFVDVTKDEKQMMHMWNSFVRKQRVLADGHIPWACEAFSRLHGPIMVRTPHLIWCWRVFMVKLWNHGLLDARTMNNCNTFLEQLQI.

The C2H2-type zinc-finger motif lies at 324 to 347 (FSCPFCLVKCASFKGLRYHLPSTH). Residues 424 to 446 (DDAHSVRSEKSRIPPGKHYERIG) show a composition bias toward basic and acidic residues. Positions 424–465 (DDAHSVRSEKSRIPPGKHYERIGGAESGQRVPPGTSPADVQS) are disordered. A VEFS-box region spans residues 505 to 583 (RQFFHSHRAQ…GHIPWACEAF (79 aa)).

This sequence belongs to the VEFS (VRN2-EMF2-FIS2-SU(Z)12) family. As to quaternary structure, in plants, PcG complexes are probably composed of a member of the EZ family (CLF or MEA), FIE, and a member of the VEFS family (FIS2, VRN2 or EMF2). Binds to ALP1. As to expression, widely expressed throughout the life cycle with higher levels in proliferating tissues. Expressed in both vegetative and the reproductive shoot meristems.

Its subcellular location is the nucleus. Polycomb group (PcG) protein. Involved in flowering processes by repressing unknown target genes and preventing reproductive development. Participates in polycomb group (PcG) protein complex-mediated (probably in complex with EMF1) silencing of the flower homeotic genes AGAMOUS (AG), PISTILLATA (PI), and APETALA3 (AP3), as well as of some regulatory genes such as ABSCISIC ACID INSENSITIVE3 (ABI3), LONG VEGETATIVE PHASE1 (LOV1), and FLOWERING LOCUS C (FLC) during vegetative development, by mediating trimethylation of histone 3 lysine 27 on the AG chromatin (H3K27me3). PcG proteins act by forming multiprotein complexes, which are required to maintain the transcriptionally repressive state of homeotic genes throughout development. PcG proteins are not required to initiate repression, but to maintain it during later stages of development. They probably act via the methylation of histones, rendering chromatin heritably changed in its expressibility. This is Polycomb group protein EMBRYONIC FLOWER 2 (EMF2) from Arabidopsis thaliana (Mouse-ear cress).